Here is a 464-residue protein sequence, read N- to C-terminus: NADH-quinone oxidoreductase subunit N 1 (464 aa).

The next 14 helical transmembrane spans lie at 6–26 (ILPEAILAIGILTVFILELFL), 33–53 (FLSVLAFIFVVLSGYSIFFVN), 65–85 (VDALNLIGKLFILAVTGFVLL), 98–118 (YGELPYLYLIATLGLMVMISS), 122–142 (AIIFTGLELASITMYILVGLF), 155–175 (YLVIGTTGTSMYALGSALVYA), 192–212 (FALGVILIISALALKVSAVPF), 237–257 (IGMYFLFVKLTMYLFSAFPDW), 259–279 (YVVMLLAVLSMFYGNIVAYAQ), 285–305 (LLAYSSIAHAGYFLTALTAVD), 312–332 (LLFYVFVYALATVGAFTVLAI), 356–376 (LASMLALFLFALIGIPPAAVF), 401–421 (ASLISAGYYLKVIVYMFLYSG), and 436–456 (FTVLGTAFLVIFFGLFPHVVL).

Belongs to the complex I subunit 2 family. NDH-1 is composed of 14 different subunits. Subunits NuoA, H, J, K, L, M, N constitute the membrane sector of the complex.

The protein resides in the cell inner membrane. It carries out the reaction a quinone + NADH + 5 H(+)(in) = a quinol + NAD(+) + 4 H(+)(out). In terms of biological role, NDH-1 shuttles electrons from NADH, via FMN and iron-sulfur (Fe-S) centers, to quinones in the respiratory chain. The immediate electron acceptor for the enzyme in this species is believed to be ubiquinone. Couples the redox reaction to proton translocation (for every two electrons transferred, four hydrogen ions are translocated across the cytoplasmic membrane), and thus conserves the redox energy in a proton gradient. This chain is NADH-quinone oxidoreductase subunit N 1, found in Aquifex aeolicus (strain VF5).